We begin with the raw amino-acid sequence, 122 residues long: Large ribosomal subunit protein uL14 (122 aa).

This sequence belongs to the universal ribosomal protein uL14 family. As to quaternary structure, part of the 50S ribosomal subunit. Forms a cluster with proteins L3 and L19. In the 70S ribosome, L14 and L19 interact and together make contacts with the 16S rRNA in bridges B5 and B8.

Functionally, binds to 23S rRNA. Forms part of two intersubunit bridges in the 70S ribosome. The polypeptide is Large ribosomal subunit protein uL14 (Chlamydia caviae (strain ATCC VR-813 / DSM 19441 / 03DC25 / GPIC) (Chlamydophila caviae)).